A 430-amino-acid chain; its full sequence is MTISNPRPLLGCIADDFTGATDLANMLVRGGMRTVQSIGIPSAEVAAGLDADAVVIALKSRTTAASEAVAESLAALQWLRDQGCEQIFFKYCSTFDSTAAGNIGQVSEALLEALGSDFTLACPAFPENGRTIFRGHLFVQDQLLSESGMQHHPLTPMTDANLVRVLQSQTRLPVGLLRYDSIAQGVEAVRSRIAELRGQGVALAIADALSDADLYTLGAACADLPLLTGGSGLALGLPENFRRAGKLRDLDAASLPKVAGGEVVLAGSASLATNAQVDAWLEAERPAWRIDPLALAAGEAVVEQALAFAREQQGTVLIYATSTPEEVKAVQRQLGAERAGALVENALGEIARGLRDSGVRRFVVAGGETSGAVVKALDVRLLQIGAQIDPGVPATVSSGGEPLALALKSGNFGGRDFFSKALGQLAGGQA.

ATP-binding positions include Ser268, 366–369 (GGET), and Gly410.

Belongs to the four-carbon acid sugar kinase family.

It carries out the reaction 3-dehydro-L-erythronate + ATP = 3-dehydro-4-O-phospho-L-erythronate + ADP + H(+). It catalyses the reaction 3-dehydro-D-erythronate + ATP = 3-dehydro-4-O-phospho-D-erythronate + ADP + H(+). In terms of biological role, catalyzes the ATP-dependent phosphorylation of 3-oxo-tetronate to 3-oxo-tetronate 4-phosphate. This chain is 3-oxo-tetronate kinase, found in Pseudomonas fluorescens (strain ATCC BAA-477 / NRRL B-23932 / Pf-5).